Reading from the N-terminus, the 473-residue chain is PEP-dependent dihydroxyacetone kinase, phosphoryl donor subunit DhaM (473 aa).

One can recognise a PTS EIIA type-4 domain in the interval 1 to 137; it reads MVNLVIVSHS…LAAKQAQLGI (137 aa). The active-site Tele-phosphohistidine intermediate is His-9. Residues 155–242 enclose the HPr domain; sequence ARSVTVTIRN…SLAAEDFGEH (88 aa). His-169 serves as the catalytic Pros-phosphohistidine intermediate. Residues 266–472 form a PTS EI-like, N-terminal part region; sequence PLPLAQPARH…IDPAAQRVSC (207 aa). Catalysis depends on His-432, which acts as the Tele-phosphohistidine intermediate.

This sequence belongs to the PEP-utilizing enzyme family. Homodimer. The dihydroxyacetone kinase complex is composed of a homodimer of DhaM, a homodimer of DhaK and the subunit DhaL.

It catalyses the reaction dihydroxyacetone + phosphoenolpyruvate = dihydroxyacetone phosphate + pyruvate. In terms of biological role, component of the dihydroxyacetone kinase complex, which is responsible for the phosphoenolpyruvate (PEP)-dependent phosphorylation of dihydroxyacetone. DhaM serves as the phosphoryl donor. Is phosphorylated by phosphoenolpyruvate in an EI- and HPr-dependent reaction, and a phosphorelay system on histidine residues finally leads to phosphoryl transfer to DhaL and dihydroxyacetone. In Pantoea ananatis (strain LMG 20103), this protein is PEP-dependent dihydroxyacetone kinase, phosphoryl donor subunit DhaM.